Reading from the N-terminus, the 226-residue chain is Lysosomal-associated transmembrane protein 4B (226 aa).

4 consecutive transmembrane segments (helical) span residues 26–46, 72–92, 100–120, and 153–173; these read ILLG…LLSA, MCIA…ATYG, WIIP…LVAV, and CLVL…GYLI. A required for NEDD4 interaction region spans residues 205 to 221; that stretch reads PPYDDATVNSATKEPPP.

Belongs to the LAPTM4/LAPTM5 transporter family. Homooligomer; upon reaching the lysosomes. Interacts with MCOLN1. Interacts with NEDD4; may play a role in the lysosomal sorting of LAPTM4B; enhances HGS association with NEDD4; mediates inhibition of EGFR degradation. Interacts with PIP5K1C; promotes SNX5 association with LAPTM4B; kinase activity of PIP5K1C is required; interaction is regulated by phosphatidylinositol 4,5-bisphosphate generated by PIP5K1C. Interacts with HGS; promotes HGS ubiquitination. Interacts with SNX5. Interacts with SLC3A2 and SLC7A5; recruits SLC3A2 and SLC7A5 to lysosomes to promote leucine uptake into these organelles and is required for mTORC1 activation. Interacts with LRRC32; decreases TGFB1 production in regulatory T cells. Interacts with BECN1; competes with EGFR for LAPTM4B binding; regulates EGFR activity. Interacts with EGFR; positively correlates with EGFR activation. In terms of processing, undergoes proteolytic cleavage following delivery to the lysosomes. Ubiquitinated by NEDD4. As to expression, strongly expressed in fetal ovary, testis, adrenal gland, liver and uterus, and weakly expressed in the spleen.

Its subcellular location is the endomembrane system. The protein localises to the late endosome membrane. It is found in the cell membrane. It localises to the cell projection. The protein resides in the lysosome membrane. Its subcellular location is the endosome membrane. The protein localises to the endosome. It is found in the multivesicular body membrane. It localises to the multivesicular body lumen. Required for optimal lysosomal function. Blocks EGF-stimulated EGFR intraluminal sorting and degradation. Conversely by binding with the phosphatidylinositol 4,5-bisphosphate, regulates its PIP5K1C interaction, inhibits HGS ubiquitination and relieves LAPTM4B inhibition of EGFR degradation. Recruits SLC3A2 and SLC7A5 (the Leu transporter) to the lysosome, promoting entry of leucine and other essential amino acid (EAA) into the lysosome, stimulating activation of proton-transporting vacuolar (V)-ATPase protein pump (V-ATPase) and hence mTORC1 activation. Plays a role as negative regulator of TGFB1 production in regulatory T cells. Binds ceramide and facilitates its exit from late endosome in order to control cell death pathways. The chain is Lysosomal-associated transmembrane protein 4B from Bos taurus (Bovine).